Here is a 1383-residue protein sequence, read N- to C-terminus: DNA-directed RNA polymerase subunit beta'' (1383 aa).

The Zn(2+) site is built by cysteine 220, cysteine 289, cysteine 296, and cysteine 299.

The protein belongs to the RNA polymerase beta' chain family. RpoC2 subfamily. In terms of assembly, in plastids the minimal PEP RNA polymerase catalytic core is composed of four subunits: alpha, beta, beta', and beta''. When a (nuclear-encoded) sigma factor is associated with the core the holoenzyme is formed, which can initiate transcription. Zn(2+) serves as cofactor.

It is found in the plastid. The protein resides in the chloroplast. The catalysed reaction is RNA(n) + a ribonucleoside 5'-triphosphate = RNA(n+1) + diphosphate. Its function is as follows. DNA-dependent RNA polymerase catalyzes the transcription of DNA into RNA using the four ribonucleoside triphosphates as substrates. This is DNA-directed RNA polymerase subunit beta'' from Oenothera biennis (German evening primrose).